Here is a 169-residue protein sequence, read N- to C-terminus: Large ribosomal subunit protein uL5 (169 aa).

The protein belongs to the universal ribosomal protein uL5 family. In terms of assembly, part of the 50S ribosomal subunit; contacts the 5S rRNA and probably tRNA. Forms a bridge to the 30S subunit in the 70S ribosome.

Functionally, this is one of the proteins that bind and probably mediate the attachment of the 5S RNA into the large ribosomal subunit, where it forms part of the central protuberance. In the 70S ribosome it contacts protein S13 of the 30S subunit (bridge B1b), connecting the 2 subunits; this bridge is implicated in subunit movement. May contact the P site tRNA; the 5S rRNA and some of its associated proteins might help stabilize positioning of ribosome-bound tRNAs. The protein is Large ribosomal subunit protein uL5 of Methanosarcina barkeri (strain Fusaro / DSM 804).